Reading from the N-terminus, the 252-residue chain is MQICLMDETGATDGALSVLAARWGLEHDEDNPMALVMTPQHLELRKRDEPKLGGIFVDFVGGAMAHRRKFGGGRGEAVAKAVGIKGDYLPDVVDATAGLGRDAFVLASVGCRVRMLERNPVVAALLDDGLTRGYADADIGGWLQERLQLIHASSLTALTDITPRPQVVYLDPMFPHRQKSALVKKEMRVFQSLVGPDLDADGLLEPARQLATKRVVVKRPDYAPPLADVATPNAIVTKGHRFDIYAGTPLTE.

S-adenosyl-L-methionine contacts are provided by residues 101–102 (RD), 117–118 (ER), 153–154 (SS), and Asp171.

Belongs to the methyltransferase superfamily. RsmJ family.

The protein resides in the cytoplasm. It carries out the reaction guanosine(1516) in 16S rRNA + S-adenosyl-L-methionine = N(2)-methylguanosine(1516) in 16S rRNA + S-adenosyl-L-homocysteine + H(+). Its function is as follows. Specifically methylates the guanosine in position 1516 of 16S rRNA. The chain is Ribosomal RNA small subunit methyltransferase J from Salmonella typhimurium (strain LT2 / SGSC1412 / ATCC 700720).